The sequence spans 551 residues: Dihydroxy-acid dehydratase (551 aa).

Asp-78 contacts Mg(2+). Residue Cys-119 coordinates [2Fe-2S] cluster. Residues Asp-120 and Lys-121 each contribute to the Mg(2+) site. Residue Lys-121 is modified to N6-carboxylysine. Cys-191 lines the [2Fe-2S] cluster pocket. Glu-441 contacts Mg(2+). The active-site Proton acceptor is the Ser-467.

It belongs to the IlvD/Edd family. Homodimer. [2Fe-2S] cluster is required as a cofactor. It depends on Mg(2+) as a cofactor.

The enzyme catalyses (2R)-2,3-dihydroxy-3-methylbutanoate = 3-methyl-2-oxobutanoate + H2O. It catalyses the reaction (2R,3R)-2,3-dihydroxy-3-methylpentanoate = (S)-3-methyl-2-oxopentanoate + H2O. It participates in amino-acid biosynthesis; L-isoleucine biosynthesis; L-isoleucine from 2-oxobutanoate: step 3/4. Its pathway is amino-acid biosynthesis; L-valine biosynthesis; L-valine from pyruvate: step 3/4. Functionally, functions in the biosynthesis of branched-chain amino acids. Catalyzes the dehydration of (2R,3R)-2,3-dihydroxy-3-methylpentanoate (2,3-dihydroxy-3-methylvalerate) into 2-oxo-3-methylpentanoate (2-oxo-3-methylvalerate) and of (2R)-2,3-dihydroxy-3-methylbutanoate (2,3-dihydroxyisovalerate) into 2-oxo-3-methylbutanoate (2-oxoisovalerate), the penultimate precursor to L-isoleucine and L-valine, respectively. The polypeptide is Dihydroxy-acid dehydratase (Pyrococcus furiosus (strain ATCC 43587 / DSM 3638 / JCM 8422 / Vc1)).